A 236-amino-acid chain; its full sequence is H2HPP isomerase (236 aa).

2 Cupin type-2 domains span residues tyrosine 40–isoleucine 106 and asparagine 151–valine 215. Positions 50, 52, 56, 91, 162, 164, 168, and 202 each coordinate a divalent metal cation. Tyrosine 223 is a binding site for substrate.

In terms of assembly, monomer. Fe(2+) serves as cofactor. It depends on Co(2+) as a cofactor.

The protein localises to the cytoplasm. It catalyses the reaction 3-[(4R)-4-hydroxycyclohexa-1,5-dien-1-yl]-2-oxopropanoate = 3-[(1E,4R)-4-hydroxycyclohex-2-en-1-ylidene]pyruvate. Its pathway is antibiotic biosynthesis; bacilysin biosynthesis. Functionally, part of the bacABCDEF operon responsible for the biosynthesis of the nonribosomally synthesized dipeptide antibiotic bacilysin, composed of L-alanine and L-anticapsin. Bacilysin is an irreversible inactivator of the glutaminase domain of glucosamine synthetase. BacB catalyzes the allylic isomerization of the endocyclic-delta(4),delta(8)-7R-dihydro-hydroxyphenylpyruvate (en-H2HPP) to generate a mixture of 3E,7R- and 3Z, 7R-olefins of the exocyclic-delta(3),delta(5)-dihydro-hydroxyphenylpyruvate (ex-H2HPP). The sequence is that of H2HPP isomerase from Bacillus amyloliquefaciens (Bacillus velezensis).